We begin with the raw amino-acid sequence, 199 residues long: Shikimate kinase (199 aa).

An ATP-binding site is contributed by 14–19 (GSGKST). Residue Ser-18 participates in Mg(2+) binding. 3 residues coordinate substrate: Asp-36, Arg-60, and Gly-82. Residue Arg-120 participates in ATP binding. Arg-147 contacts substrate. Residues 179–199 (YVRRAEKNQNSHSQTKKQSRK) form a disordered region.

The protein belongs to the shikimate kinase family. In terms of assembly, monomer. Mg(2+) is required as a cofactor.

Its subcellular location is the cytoplasm. It carries out the reaction shikimate + ATP = 3-phosphoshikimate + ADP + H(+). Its pathway is metabolic intermediate biosynthesis; chorismate biosynthesis; chorismate from D-erythrose 4-phosphate and phosphoenolpyruvate: step 5/7. Its function is as follows. Catalyzes the specific phosphorylation of the 3-hydroxyl group of shikimic acid using ATP as a cosubstrate. The sequence is that of Shikimate kinase from Chlorobium phaeobacteroides (strain BS1).